A 226-amino-acid polypeptide reads, in one-letter code: Cytidylate kinase (226 aa).

11–19 (GPAGAGKST) contacts ATP.

The protein belongs to the cytidylate kinase family. Type 1 subfamily.

The protein resides in the cytoplasm. It catalyses the reaction CMP + ATP = CDP + ADP. It carries out the reaction dCMP + ATP = dCDP + ADP. The polypeptide is Cytidylate kinase (Pelotomaculum thermopropionicum (strain DSM 13744 / JCM 10971 / SI)).